The primary structure comprises 336 residues: Adenylosuccinate synthetase (336 aa).

GTP is bound by residues Gly-12–Lys-18 and Gly-42–Ser-44. Asp-13 functions as the Proton acceptor in the catalytic mechanism. Mg(2+) is bound by residues Asp-13 and Gly-42. IMP-binding positions include Asp-13 to Lys-16, Asn-40 to His-43, Thr-127, Arg-141, Gln-179, Thr-194, and Arg-256. Residue His-43 is the Proton donor of the active site. Position 252–258 (Thr-252–Arg-258) interacts with substrate. GTP is bound by residues Arg-258, Cys-284–Asp-286, and Ser-324–Gly-326.

This sequence belongs to the adenylosuccinate synthetase family. Homodimer. The cofactor is Mg(2+).

The protein resides in the cytoplasm. It carries out the reaction IMP + L-aspartate + GTP = N(6)-(1,2-dicarboxyethyl)-AMP + GDP + phosphate + 2 H(+). It functions in the pathway purine metabolism; AMP biosynthesis via de novo pathway; AMP from IMP: step 1/2. Its function is as follows. Plays an important role in the de novo pathway of purine nucleotide biosynthesis. Catalyzes the first committed step in the biosynthesis of AMP from IMP. This is Adenylosuccinate synthetase from Methanococcus aeolicus (strain ATCC BAA-1280 / DSM 17508 / OCM 812 / Nankai-3).